The chain runs to 123 residues: Dormancy-associated protein homolog 4 (123 aa).

A disordered region spans residues 7–86 (LWDETVAGPT…NPGTPLTPGT (80 aa)). Over residues 30-46 (LSTVRSSPPSLSSDQVT) the composition is skewed to low complexity. Polar residues-rich tracts occupy residues 47–58 (RSIMVTKGNNNV) and 71–80 (PTCSSSNPGT). Ser-74 carries the post-translational modification Phosphoserine.

Belongs to the DRM1/ARP family.

This Arabidopsis thaliana (Mouse-ear cress) protein is Dormancy-associated protein homolog 4.